A 66-amino-acid polypeptide reads, in one-letter code: Large ribosomal subunit protein bL31 (66 aa).

Zn(2+) contacts are provided by Cys16, Cys18, Cys36, and Cys39.

This sequence belongs to the bacterial ribosomal protein bL31 family. Type A subfamily. In terms of assembly, part of the 50S ribosomal subunit. Zn(2+) serves as cofactor.

Functionally, binds the 23S rRNA. This chain is Large ribosomal subunit protein bL31, found in Campylobacter hominis (strain ATCC BAA-381 / DSM 21671 / CCUG 45161 / LMG 19568 / NCTC 13146 / CH001A).